A 217-amino-acid polypeptide reads, in one-letter code: Thiamine-phosphate synthase (217 aa).

Residues 39–43 (QLRRK) and Asn-71 contribute to the 4-amino-2-methyl-5-(diphosphooxymethyl)pyrimidine site. Mg(2+)-binding residues include Asp-72 and Asp-91. A 4-amino-2-methyl-5-(diphosphooxymethyl)pyrimidine-binding site is contributed by Ser-110. 137-139 (SPT) is a binding site for 2-[(2R,5Z)-2-carboxy-4-methylthiazol-5(2H)-ylidene]ethyl phosphate. Lys-140 provides a ligand contact to 4-amino-2-methyl-5-(diphosphooxymethyl)pyrimidine. Residues Gly-173 and 193–194 (IS) contribute to the 2-[(2R,5Z)-2-carboxy-4-methylthiazol-5(2H)-ylidene]ethyl phosphate site.

This sequence belongs to the thiamine-phosphate synthase family. It depends on Mg(2+) as a cofactor.

It carries out the reaction 2-[(2R,5Z)-2-carboxy-4-methylthiazol-5(2H)-ylidene]ethyl phosphate + 4-amino-2-methyl-5-(diphosphooxymethyl)pyrimidine + 2 H(+) = thiamine phosphate + CO2 + diphosphate. The enzyme catalyses 2-(2-carboxy-4-methylthiazol-5-yl)ethyl phosphate + 4-amino-2-methyl-5-(diphosphooxymethyl)pyrimidine + 2 H(+) = thiamine phosphate + CO2 + diphosphate. It catalyses the reaction 4-methyl-5-(2-phosphooxyethyl)-thiazole + 4-amino-2-methyl-5-(diphosphooxymethyl)pyrimidine + H(+) = thiamine phosphate + diphosphate. It participates in cofactor biosynthesis; thiamine diphosphate biosynthesis; thiamine phosphate from 4-amino-2-methyl-5-diphosphomethylpyrimidine and 4-methyl-5-(2-phosphoethyl)-thiazole: step 1/1. In terms of biological role, condenses 4-methyl-5-(beta-hydroxyethyl)thiazole monophosphate (THZ-P) and 2-methyl-4-amino-5-hydroxymethyl pyrimidine pyrophosphate (HMP-PP) to form thiamine monophosphate (TMP). The chain is Thiamine-phosphate synthase from Bordetella bronchiseptica (strain ATCC BAA-588 / NCTC 13252 / RB50) (Alcaligenes bronchisepticus).